The chain runs to 141 residues: MERLQGLLLWLLLSPSVVWASRGPLRPLCRPVNATLAAENEFCPVCITFTTSICAGYCPSMVRVLPAALPPVPQPVCTYRELRFASVRLPGCPPGVDPIVSFPVALSCRCGPCRLSSSDCGGPRTQPMTCDLPHLPGLLLF.

Positions 1–20 are cleaved as a signal peptide; it reads MERLQGLLLWLLLSPSVVWA. Intrachain disulfides connect C29–C77, C43–C92, C46–C130, C54–C108, C58–C110, and C113–C120. N33 is a glycosylation site (N-linked (GlcNAc...) asparagine).

The protein belongs to the glycoprotein hormones subunit beta family. Heterodimer of a common alpha chain and a unique beta chain which confers biological specificity to thyrotropin, lutropin, follitropin and gonadotropin.

The protein localises to the secreted. Its function is as follows. Promotes spermatogenesis and ovulation by stimulating the testes and ovaries to synthesize steroids. The sequence is that of Lutropin subunit beta (Lhb) from Rattus norvegicus (Rat).